We begin with the raw amino-acid sequence, 263 residues long: Hydroxyethylthiazole kinase 1 (263 aa).

Residue methionine 42 participates in substrate binding. ATP contacts are provided by lysine 118 and threonine 164. Residue glycine 191 participates in substrate binding.

Belongs to the Thz kinase family. Requires Mg(2+) as cofactor.

The enzyme catalyses 5-(2-hydroxyethyl)-4-methylthiazole + ATP = 4-methyl-5-(2-phosphooxyethyl)-thiazole + ADP + H(+). Its pathway is cofactor biosynthesis; thiamine diphosphate biosynthesis; 4-methyl-5-(2-phosphoethyl)-thiazole from 5-(2-hydroxyethyl)-4-methylthiazole: step 1/1. In terms of biological role, catalyzes the phosphorylation of the hydroxyl group of 4-methyl-5-beta-hydroxyethylthiazole (THZ). The sequence is that of Hydroxyethylthiazole kinase 1 from Clostridium botulinum (strain ATCC 19397 / Type A).